Consider the following 74-residue polypeptide: Antimicrobial peptide HsAp4 (74 aa).

Residues Met1–Gly21 form the signal peptide. A propeptide spanning residues Met22–Ile33 is cleaved from the precursor. At Arg65 the chain carries Arginine amide. Positions Ala69–Thr74 are excised as a propeptide.

Belongs to the non-disulfide-bridged peptide (NDBP) superfamily. Medium-length antimicrobial peptide (group 3) family. As to expression, expressed by the venom gland.

The protein resides in the secreted. It is found in the target cell membrane. Possesses antimicrobial activity against both Gram-negative and Gram-positive bacteria, as well as against the fungus C.tropicalis. Also possesses a relatively high hemolytic activity. May act by disrupting the integrity of the bacterial cell membrane. This chain is Antimicrobial peptide HsAp4, found in Heterometrus spinifer (Asia giant forest scorpion).